The primary structure comprises 1299 residues: Phosphoribosylformylglycinamidine synthase (1299 aa).

ATP is bound by residues 310–321 (GAATGAGGEIRD), 389–391 (TGY), and Ala-680. Residues Asp-681, Glu-720, Asn-724, and Asp-888 each coordinate Mg(2+). Residue Ser-890 participates in ATP binding. The Glutamine amidotransferase type-1 domain maps to 1046–1299 (VAVLREQGVN…MFRNARVWLG (254 aa)). Cys-1139 (nucleophile) is an active-site residue. Catalysis depends on residues His-1264 and Glu-1266.

In the N-terminal section; belongs to the FGAMS family. As to quaternary structure, monomer.

The protein localises to the cytoplasm. The enzyme catalyses N(2)-formyl-N(1)-(5-phospho-beta-D-ribosyl)glycinamide + L-glutamine + ATP + H2O = 2-formamido-N(1)-(5-O-phospho-beta-D-ribosyl)acetamidine + L-glutamate + ADP + phosphate + H(+). Its pathway is purine metabolism; IMP biosynthesis via de novo pathway; 5-amino-1-(5-phospho-D-ribosyl)imidazole from N(2)-formyl-N(1)-(5-phospho-D-ribosyl)glycinamide: step 1/2. Phosphoribosylformylglycinamidine synthase involved in the purines biosynthetic pathway. Catalyzes the ATP-dependent conversion of formylglycinamide ribonucleotide (FGAR) and glutamine to yield formylglycinamidine ribonucleotide (FGAM) and glutamate. This chain is Phosphoribosylformylglycinamidine synthase, found in Myxococcus xanthus (strain DK1622).